A 251-amino-acid chain; its full sequence is Haloacid dehalogenase-like hydrolase domain-containing protein 3 (251 aa).

Lysine 15 carries the N6-acetyllysine; alternate modification. The residue at position 15 (lysine 15) is an N6-succinyllysine; alternate. An N6-acetyllysine modification is found at lysine 130.

The protein belongs to the HAD-like hydrolase superfamily.

This is Haloacid dehalogenase-like hydrolase domain-containing protein 3 (Hdhd3) from Mus musculus (Mouse).